A 414-amino-acid polypeptide reads, in one-letter code: Putative truncated GMC-type inactive oxidoreductase R832 (414 aa).

Residues Met1–Ala20 form the signal peptide. Residue Asp38 to Arg67 participates in FAD binding.

It belongs to the GMC oxidoreductase family. It depends on FAD as a cofactor.

The protein is Putative truncated GMC-type inactive oxidoreductase R832 of Acanthamoeba polyphaga (Amoeba).